Reading from the N-terminus, the 372-residue chain is Probable arabinan endo-1,5-alpha-L-arabinosidase B (372 aa).

A signal peptide spans 1 to 16 (MTVLVALFCLVTWTLC). Residues 23–34 (STQGTQQPQQPE) show a composition bias toward low complexity. A disordered region spans residues 23 to 52 (STQGTQQPQQPEKTPHPHPQPEDAFPPTHA). The active-site Proton acceptor is the Asp-59. An N-linked (GlcNAc...) asparagine glycan is attached at Asn-120. The Proton donor role is filled by Glu-252. A glycan (N-linked (GlcNAc...) asparagine) is linked at Asn-363.

The protein belongs to the glycosyl hydrolase 43 family.

It localises to the secreted. The catalysed reaction is Endohydrolysis of (1-&gt;5)-alpha-arabinofuranosidic linkages in (1-&gt;5)-arabinans.. It participates in glycan metabolism; L-arabinan degradation. In terms of biological role, endo-1,5-alpha-L-arabinanase involved in degradation of pectin. Its preferred substrate is linear 1,5-alpha-L-arabinan. The sequence is that of Probable arabinan endo-1,5-alpha-L-arabinosidase B (abnB) from Aspergillus fumigatus (strain CBS 144.89 / FGSC A1163 / CEA10) (Neosartorya fumigata).